The following is a 724-amino-acid chain: Aquaglyceroporin-4 (724 aa).

Disordered stretches follow at residues 1-167 (MADE…SIRR), 248-267 (INMA…NQAD), and 302-396 (AHGL…DLDG). The Cytoplasmic portion of the chain corresponds to 1–434 (MADEEIKPTS…VIRLRFREPL (434 aa)). Polar residues predominate over residues 87 to 96 (LTGQVPQDND). Positions 252-265 (QQQQQQQQQQPQNQ) are enriched in low complexity. Composition is skewed to polar residues over residues 307–325 (SPTN…TAPS) and 360–370 (PSQTSQNSQNE). Residues 435–455 (AELLAVTCQLTLGFCADLVVV) traverse the membrane as a helical segment. At 456 to 472 (TSGKNASPAGNEATTDW) the chain is on the extracellular side. A helical transmembrane segment spans residues 473 to 493 (AWGLASMLGIYIAGGISGAHL). An NPA 1 motif is present at residues 494–496 (NPA). The Cytoplasmic segment spans residues 494–513 (NPAISIMLWIYRGFPLRKVP). Residues 514 to 534 (MYVLAQILGAFIAALISFGLY) form a helical membrane-spanning segment. Residues 535–567 (QTNIVEYGGTDLKTSDTMGAFITYPRYPWINAS) are Extracellular-facing. Asn565 carries an N-linked (GlcNAc...) asparagine glycan. Residues 568–588 (TSFFTEFVGTAILAVAVLALG) form a helical membrane-spanning segment. Over 589-595 (DDMNAPP) the chain is Cytoplasmic. Residues 596 to 616 (GAGMSAFILGLVITVLSMAFG) traverse the membrane as a helical segment. The Extracellular segment spans residues 617–647 (YNTGAALNPSRDLGPRLALAALGYGKDLFTD). Positions 624–626 (NPS) match the NPA 2 motif. The helical transmembrane segment at 648–668 (VYWIWGNWCAPILGAIFGAFL) threads the bilayer. Topologically, residues 669 to 724 (YDAAIFAGGESPVNYPRKRIKRAGHKWRKKWGVRLRKMKPAKKGEDEAYRRWKESQ) are cytoplasmic.

The protein belongs to the MIP/aquaporin (TC 1.A.8) family.

Its subcellular location is the membrane. The enzyme catalyses H2O(in) = H2O(out). The catalysed reaction is glycerol(in) = glycerol(out). Its function is as follows. Water channel required to facilitate the transport of water across membranes. May play a role in the vegetative growth. This is Aquaglyceroporin-4 from Botryotinia fuckeliana (strain B05.10) (Noble rot fungus).